The sequence spans 70 residues: Large ribosomal subunit protein bL31 (70 aa).

Zn(2+) is bound by residues cysteine 16, cysteine 18, cysteine 38, and cysteine 41.

It belongs to the bacterial ribosomal protein bL31 family. Type A subfamily. In terms of assembly, part of the 50S ribosomal subunit. It depends on Zn(2+) as a cofactor.

Binds the 23S rRNA. The chain is Large ribosomal subunit protein bL31 from Vesicomyosocius okutanii subsp. Calyptogena okutanii (strain HA).